Consider the following 191-residue polypeptide: MEVSREIIEKLEIFQKLVKKWNKSINLVSGNTIHNFWQRHILDSLQLMQYIDNKEIHLVDIGSGAGFPGIVLSIAGVAKVSLIEADLRKCIFLEKASKISNNNIQIINQRIEKVAIDCSILTCRAFSKLNTIFNCIKNISVQEKVLLLKGKNYLTEIVAAKEMWLFDYLIHQSITCEEGKILEVSNLTKII.

S-adenosyl-L-methionine-binding positions include G62, F67, 111–112, and R124; that span reads IE.

This sequence belongs to the methyltransferase superfamily. RNA methyltransferase RsmG family.

It localises to the cytoplasm. It carries out the reaction guanosine(527) in 16S rRNA + S-adenosyl-L-methionine = N(7)-methylguanosine(527) in 16S rRNA + S-adenosyl-L-homocysteine. Its function is as follows. Specifically methylates the N7 position of guanine in position 527 of 16S rRNA. In Rickettsia akari (strain Hartford), this protein is Ribosomal RNA small subunit methyltransferase G.